Consider the following 217-residue polypeptide: Uracil-DNA glycosylase (217 aa).

Aspartate 62 functions as the Proton acceptor in the catalytic mechanism.

Belongs to the uracil-DNA glycosylase (UDG) superfamily. UNG family.

The protein localises to the cytoplasm. It catalyses the reaction Hydrolyzes single-stranded DNA or mismatched double-stranded DNA and polynucleotides, releasing free uracil.. Its function is as follows. Excises uracil residues from the DNA which can arise as a result of misincorporation of dUMP residues by DNA polymerase or due to deamination of cytosine. The chain is Uracil-DNA glycosylase from Streptococcus pneumoniae (strain Hungary19A-6).